Here is a 232-residue protein sequence, read N- to C-terminus: Phosphatidylserine decarboxylase proenzyme (232 aa).

S190 (schiff-base intermediate with substrate; via pyruvic acid) is an active-site residue. S190 bears the Pyruvic acid (Ser); by autocatalysis mark.

It belongs to the phosphatidylserine decarboxylase family. PSD-A subfamily. Heterodimer of a large membrane-associated beta subunit and a small pyruvoyl-containing alpha subunit. It depends on pyruvate as a cofactor. Post-translationally, is synthesized initially as an inactive proenzyme. Formation of the active enzyme involves a self-maturation process in which the active site pyruvoyl group is generated from an internal serine residue via an autocatalytic post-translational modification. Two non-identical subunits are generated from the proenzyme in this reaction, and the pyruvate is formed at the N-terminus of the alpha chain, which is derived from the carboxyl end of the proenzyme. The post-translation cleavage follows an unusual pathway, termed non-hydrolytic serinolysis, in which the side chain hydroxyl group of the serine supplies its oxygen atom to form the C-terminus of the beta chain, while the remainder of the serine residue undergoes an oxidative deamination to produce ammonia and the pyruvoyl prosthetic group on the alpha chain.

It localises to the cell membrane. It carries out the reaction a 1,2-diacyl-sn-glycero-3-phospho-L-serine + H(+) = a 1,2-diacyl-sn-glycero-3-phosphoethanolamine + CO2. It participates in phospholipid metabolism; phosphatidylethanolamine biosynthesis; phosphatidylethanolamine from CDP-diacylglycerol: step 2/2. Its function is as follows. Catalyzes the formation of phosphatidylethanolamine (PtdEtn) from phosphatidylserine (PtdSer). This chain is Phosphatidylserine decarboxylase proenzyme, found in Brucella abortus (strain S19).